Reading from the N-terminus, the 157-residue chain is Vitamin K-dependent protein C (157 aa).

Residues 1 to 157 form the Peptidase S1 domain; sequence EKWELDLDIK…GCGRLHNYGV (157 aa). Residue Asn-17 is glycosylated (N-linked (GlcNAc...) asparagine). The active-site Charge relay system is the Asp-26. N-linked (GlcNAc...) asparagine glycosylation occurs at Asn-78. Disulfide bonds link Cys-96/Cys-110 and Cys-121/Cys-149. Ser-125 serves as the catalytic Charge relay system.

It belongs to the peptidase S1 family. Plasma; synthesized in the liver.

It is found in the secreted. Its subcellular location is the golgi apparatus. The protein resides in the endoplasmic reticulum. It carries out the reaction Degradation of blood coagulation factors Va and VIIIa.. In terms of biological role, protein C is a vitamin K-dependent serine protease that regulates blood coagulation by inactivating factors Va and VIIIa in the presence of calcium ions and phospholipids. Exerts a protective effect on the endothelial cell barrier function. This is Vitamin K-dependent protein C (PROC) from Felis catus (Cat).